The sequence spans 206 residues: Alpha-amylase/trypsin inhibitor (206 aa).

Cystine bridges form between cysteine 9–cysteine 205, cysteine 51–cysteine 61, cysteine 66–cysteine 72, cysteine 118–cysteine 194, cysteine 124–cysteine 177, cysteine 132–cysteine 142, cysteine 146–cysteine 155, and cysteine 156–cysteine 164.

The protein belongs to the thaumatin family.

Its function is as follows. Inhibits both trypsin and alpha-amylase. Inhibits the growth of some plant fungal pathogens. In Zea mays (Maize), this protein is Alpha-amylase/trypsin inhibitor.